The chain runs to 54 residues: ATP synthase F(0) complex subunit 8 (54 aa).

A helical transmembrane segment spans residues 9 to 29 (WFMILFFSWVIFLTIIPTKII). The disordered stretch occupies residues 35 to 54 (NDPTQVDAKEHKNDTWNWPW).

This sequence belongs to the ATPase protein 8 family. Component of the ATP synthase complex composed at least of ATP5F1A/subunit alpha, ATP5F1B/subunit beta, ATP5MC1/subunit c (homooctomer), MT-ATP6/subunit a, MT-ATP8/subunit 8, ATP5ME/subunit e, ATP5MF/subunit f, ATP5MG/subunit g, ATP5MK/subunit k, ATP5MJ/subunit j, ATP5F1C/subunit gamma, ATP5F1D/subunit delta, ATP5F1E/subunit epsilon, ATP5PF/subunit F6, ATP5PB/subunit b, ATP5PD/subunit d, ATP5PO/subunit OSCP. ATP synthase complex consists of a soluble F(1) head domain (subunits alpha(3) and beta(3)) - the catalytic core - and a membrane F(0) domain - the membrane proton channel (subunits c, a, 8, e, f, g, k and j). These two domains are linked by a central stalk (subunits gamma, delta, and epsilon) rotating inside the F1 region and a stationary peripheral stalk (subunits F6, b, d, and OSCP).

It is found in the mitochondrion membrane. Subunit 8, of the mitochondrial membrane ATP synthase complex (F(1)F(0) ATP synthase or Complex V) that produces ATP from ADP in the presence of a proton gradient across the membrane which is generated by electron transport complexes of the respiratory chain. ATP synthase complex consist of a soluble F(1) head domain - the catalytic core - and a membrane F(1) domain - the membrane proton channel. These two domains are linked by a central stalk rotating inside the F(1) region and a stationary peripheral stalk. During catalysis, ATP synthesis in the catalytic domain of F(1) is coupled via a rotary mechanism of the central stalk subunits to proton translocation. In vivo, can only synthesize ATP although its ATP hydrolase activity can be activated artificially in vitro. Part of the complex F(0) domain. This chain is ATP synthase F(0) complex subunit 8, found in Danio rerio (Zebrafish).